The primary structure comprises 517 residues: Forkhead box protein N4 (517 aa).

A DNA-binding region (fork-head) is located at residues 193–289 (KPIYSYSCLI…EEMHKWKRKD (97 aa)). Disordered stretches follow at residues 365–398 (VQPQ…LPHP) and 497–517 (SGTS…IALL).

The protein localises to the nucleus. In terms of biological role, transcription factor essential for neural and some non-neural tissues development, such as retina and lung respectively. Binds to an 11-bp consensus sequence containing the invariant tetranucleotide 5'-ACGC-3'. During development of the central nervous system, is required to specify the amacrine and horizontal cell fates from multipotent retinal progenitors while suppressing the alternative photoreceptor cell fates through activating DLL4-NOTCH signaling. Also acts synergistically with ASCL1/MASH1 to activate DLL4-NOTCH signaling and drive commitment of p2 progenitors to the V2b interneuron fates during spinal cord neurogenesis. In development of non-neural tissues, plays an essential role in the specification of the atrioventricular canal and is indirectly required for patterning the distal airway during lung development. The chain is Forkhead box protein N4 (FOXN4) from Homo sapiens (Human).